A 131-amino-acid polypeptide reads, in one-letter code: Small ribosomal subunit protein uS8 (131 aa).

It belongs to the universal ribosomal protein uS8 family. Part of the 30S ribosomal subunit. Contacts proteins S5 and S12.

One of the primary rRNA binding proteins, it binds directly to 16S rRNA central domain where it helps coordinate assembly of the platform of the 30S subunit. In Burkholderia multivorans (strain ATCC 17616 / 249), this protein is Small ribosomal subunit protein uS8.